Consider the following 263-residue polypeptide: Isatin hydrolase (263 aa).

62 to 66 (FFAWN) contacts substrate. Positions 73, 77, and 79 each coordinate Mn(2+). Histidine 83 serves as the catalytic Proton donor/acceptor. Histidine 212 contributes to the substrate binding site.

This sequence belongs to the Cyclase 1 superfamily. As to quaternary structure, homodimer. Mn(2+) is required as a cofactor.

The catalysed reaction is isatin + H2O = isatinate + H(+). Its activity is regulated as follows. Inhibited by thioisatinate. In terms of biological role, involved in the degradation of the plant hormone indole-3-acetic acid (IAA). Catalyzes the hydrolysis of the cyclic amide bond (lactam) of isatin (1H-indole-2,3-dione) to yield isatinate (2-(2-aminophenyl)-2-oxoacetate). This Roseibium aggregatum (strain ATCC 25650 / DSM 13394 / JCM 20685 / NBRC 16684 / NCIMB 2208 / IAM 12614 / B1) (Stappia aggregata) protein is Isatin hydrolase.